We begin with the raw amino-acid sequence, 45 residues long: Large ribosomal subunit protein bL34 (45 aa).

The segment covering 1–10 has biased composition (polar residues); sequence MTQRTLGGTN. The tract at residues 1-45 is disordered; the sequence is MTQRTLGGTNRKQKRTSGFRARMRTHNGRKVIQARRSKGRHRLAV. The segment covering 11-45 has biased composition (basic residues); the sequence is RKQKRTSGFRARMRTHNGRKVIQARRSKGRHRLAV.

The protein belongs to the bacterial ribosomal protein bL34 family.

The protein is Large ribosomal subunit protein bL34 (rpmH) of Synechocystis sp. (strain ATCC 27184 / PCC 6803 / Kazusa).